The chain runs to 251 residues: Ditrans,polycis-undecaprenyl-diphosphate synthase ((2E,6E)-farnesyl-diphosphate specific) (251 aa).

Aspartate 20 is a catalytic residue. Residue aspartate 20 participates in Mg(2+) binding. Substrate is bound by residues 21 to 24 (GNGR), tryptophan 25, arginine 33, histidine 37, and 65 to 67 (SSE). The Proton acceptor role is filled by asparagine 68. Substrate is bound by residues tryptophan 69, arginine 71, arginine 188, and 194–196 (RIS). Glutamate 207 provides a ligand contact to Mg(2+).

The protein belongs to the UPP synthase family. In terms of assembly, homodimer. Requires Mg(2+) as cofactor.

It catalyses the reaction 8 isopentenyl diphosphate + (2E,6E)-farnesyl diphosphate = di-trans,octa-cis-undecaprenyl diphosphate + 8 diphosphate. Its function is as follows. Catalyzes the sequential condensation of isopentenyl diphosphate (IPP) with (2E,6E)-farnesyl diphosphate (E,E-FPP) to yield (2Z,6Z,10Z,14Z,18Z,22Z,26Z,30Z,34E,38E)-undecaprenyl diphosphate (di-trans,octa-cis-UPP). UPP is the precursor of glycosyl carrier lipid in the biosynthesis of bacterial cell wall polysaccharide components such as peptidoglycan and lipopolysaccharide. This chain is Ditrans,polycis-undecaprenyl-diphosphate synthase ((2E,6E)-farnesyl-diphosphate specific), found in Vibrio vulnificus (strain CMCP6).